Here is a 487-residue protein sequence, read N- to C-terminus: Glutamate--tRNA ligase (487 aa).

Positions 12–22 match the 'HIGH' region motif; the sequence is PSPTGYMHVGN. The short motif at 249-253 is the 'KMSKS' region element; the sequence is KLSKR. ATP is bound at residue K252.

Belongs to the class-I aminoacyl-tRNA synthetase family. Glutamate--tRNA ligase type 1 subfamily. As to quaternary structure, monomer.

The protein localises to the cytoplasm. It catalyses the reaction tRNA(Glu) + L-glutamate + ATP = L-glutamyl-tRNA(Glu) + AMP + diphosphate. In terms of biological role, catalyzes the attachment of glutamate to tRNA(Glu) in a two-step reaction: glutamate is first activated by ATP to form Glu-AMP and then transferred to the acceptor end of tRNA(Glu). The sequence is that of Glutamate--tRNA ligase from Clostridium novyi (strain NT).